The primary structure comprises 624 residues: Dihydroxy-acid dehydratase (624 aa).

Aspartate 81 provides a ligand contact to Mg(2+). Cysteine 122 provides a ligand contact to [2Fe-2S] cluster. Mg(2+)-binding residues include aspartate 123 and lysine 124. Lysine 124 is modified (N6-carboxylysine). Cysteine 195 is a [2Fe-2S] cluster binding site. Glutamate 499 is a Mg(2+) binding site. Residue serine 525 is the Proton acceptor of the active site.

This sequence belongs to the IlvD/Edd family. Homodimer. Requires [2Fe-2S] cluster as cofactor. It depends on Mg(2+) as a cofactor.

It catalyses the reaction (2R)-2,3-dihydroxy-3-methylbutanoate = 3-methyl-2-oxobutanoate + H2O. The catalysed reaction is (2R,3R)-2,3-dihydroxy-3-methylpentanoate = (S)-3-methyl-2-oxopentanoate + H2O. The protein operates within amino-acid biosynthesis; L-isoleucine biosynthesis; L-isoleucine from 2-oxobutanoate: step 3/4. It participates in amino-acid biosynthesis; L-valine biosynthesis; L-valine from pyruvate: step 3/4. Functions in the biosynthesis of branched-chain amino acids. Catalyzes the dehydration of (2R,3R)-2,3-dihydroxy-3-methylpentanoate (2,3-dihydroxy-3-methylvalerate) into 2-oxo-3-methylpentanoate (2-oxo-3-methylvalerate) and of (2R)-2,3-dihydroxy-3-methylbutanoate (2,3-dihydroxyisovalerate) into 2-oxo-3-methylbutanoate (2-oxoisovalerate), the penultimate precursor to L-isoleucine and L-valine, respectively. This is Dihydroxy-acid dehydratase from Shewanella baltica (strain OS155 / ATCC BAA-1091).